A 121-amino-acid polypeptide reads, in one-letter code: MIYGIGLDITELKRIASMAGRQKRFAERILTRSELDQYYELSEKRKNEFLAGRFAAKEAFSKAFGTGIGRQLSFQDIEIRKDQNGKPYIICTKLSQAAVHVSITHTKEYAAAQVVIERLSS.

Positions 8 and 58 each coordinate Mg(2+).

Belongs to the P-Pant transferase superfamily. AcpS family. As to quaternary structure, homotrimer. Requires Mg(2+) as cofactor.

Its subcellular location is the cytoplasm. The enzyme catalyses apo-[ACP] + CoA = holo-[ACP] + adenosine 3',5'-bisphosphate + H(+). Its function is as follows. Transfers the 4'-phosphopantetheine moiety from coenzyme A to a Ser of fatty acid acyl-carrier-protein ACP. Also modifies the D-alanyl carrier protein but fails to recognize PCP and AcpK, an acyl carrier protein of secondary metabolism. The protein is Holo-[acyl-carrier-protein] synthase of Bacillus subtilis (strain 168).